Reading from the N-terminus, the 912-residue chain is Protein translocase subunit SecA (912 aa).

ATP-binding positions include Gln-86, 104–108 (GEGKT), and Asp-494. The segment at 860-912 (EAPEKPAQLQYTAPGEDGASQTRVEGRSSGRSGNPAKAAQDGARKPAPKKKKR) is disordered.

It belongs to the SecA family. In terms of assembly, monomer and homodimer. Part of the essential Sec protein translocation apparatus which comprises SecA, SecYEG and auxiliary proteins SecDF. Other proteins may also be involved.

The protein resides in the cell membrane. It is found in the cytoplasm. The catalysed reaction is ATP + H2O + cellular proteinSide 1 = ADP + phosphate + cellular proteinSide 2.. Its function is as follows. Part of the Sec protein translocase complex. Interacts with the SecYEG preprotein conducting channel. Has a central role in coupling the hydrolysis of ATP to the transfer of proteins into and across the cell membrane, serving as an ATP-driven molecular motor driving the stepwise translocation of polypeptide chains across the membrane. The sequence is that of Protein translocase subunit SecA from Arthrobacter sp. (strain FB24).